Reading from the N-terminus, the 208-residue chain is FMN-dependent NADH:quinone oxidoreductase 1 (208 aa).

Position 17 to 19 (17 to 19 (SVS)) interacts with FMN.

It belongs to the azoreductase type 1 family. Homodimer. It depends on FMN as a cofactor.

The catalysed reaction is 2 a quinone + NADH + H(+) = 2 a 1,4-benzosemiquinone + NAD(+). It carries out the reaction N,N-dimethyl-1,4-phenylenediamine + anthranilate + 2 NAD(+) = 2-(4-dimethylaminophenyl)diazenylbenzoate + 2 NADH + 2 H(+). Its function is as follows. Quinone reductase that provides resistance to thiol-specific stress caused by electrophilic quinones. In terms of biological role, also exhibits azoreductase activity. Catalyzes the reductive cleavage of the azo bond in aromatic azo compounds to the corresponding amines. This chain is FMN-dependent NADH:quinone oxidoreductase 1, found in Listeria monocytogenes serotype 4b (strain F2365).